The primary structure comprises 341 residues: 2-dehydro-3-deoxy-L-galactonate 5-dehydrogenase (341 aa).

Cysteine 37 serves as a coordination point for Zn(2+). Residues threonine 39 and histidine 42 each act as charge relay system in the active site. Zn(2+) contacts are provided by histidine 60, glutamate 61, cysteine 90, cysteine 93, cysteine 96, and cysteine 104.

Belongs to the zinc-containing alcohol dehydrogenase family. Requires Zn(2+) as cofactor.

The enzyme catalyses 2-dehydro-3-deoxy-L-galactonate + NAD(+) = 3-deoxy-D-glycero-2,5-hexodiulosonate + NADH + H(+). Its function is as follows. Involved in the degradation of 3,6-anhydro-L-galactose, which is the major monomeric sugar of red macroalgae. Catalyzes the third step of the pathway, the NAD(+)-dependent oxidation of 2-dehydro-3-deoxy-L-galactonate (L-KDGal) to 3-deoxy-D-glycero-2,5-hexodiulosonate (L-DDGal). This Pseudoalteromonas atlantica (strain T6c / ATCC BAA-1087) protein is 2-dehydro-3-deoxy-L-galactonate 5-dehydrogenase.